The chain runs to 404 residues: Probable tRNA sulfurtransferase (404 aa).

Positions 60 to 165 (QPVVEALKLV…DEAAYISYEE (106 aa)) constitute a THUMP domain. ATP is bound by residues 183–184 (ML), 208–209 (HF), arginine 265, glycine 287, and glutamine 296.

It belongs to the ThiI family.

It is found in the cytoplasm. The catalysed reaction is [ThiI sulfur-carrier protein]-S-sulfanyl-L-cysteine + a uridine in tRNA + 2 reduced [2Fe-2S]-[ferredoxin] + ATP + H(+) = [ThiI sulfur-carrier protein]-L-cysteine + a 4-thiouridine in tRNA + 2 oxidized [2Fe-2S]-[ferredoxin] + AMP + diphosphate. The enzyme catalyses [ThiS sulfur-carrier protein]-C-terminal Gly-Gly-AMP + S-sulfanyl-L-cysteinyl-[cysteine desulfurase] + AH2 = [ThiS sulfur-carrier protein]-C-terminal-Gly-aminoethanethioate + L-cysteinyl-[cysteine desulfurase] + A + AMP + 2 H(+). Its pathway is cofactor biosynthesis; thiamine diphosphate biosynthesis. In terms of biological role, catalyzes the ATP-dependent transfer of a sulfur to tRNA to produce 4-thiouridine in position 8 of tRNAs, which functions as a near-UV photosensor. Also catalyzes the transfer of sulfur to the sulfur carrier protein ThiS, forming ThiS-thiocarboxylate. This is a step in the synthesis of thiazole, in the thiamine biosynthesis pathway. The sulfur is donated as persulfide by IscS. The chain is Probable tRNA sulfurtransferase from Streptococcus pyogenes serotype M6 (strain ATCC BAA-946 / MGAS10394).